Consider the following 156-residue polypeptide: 6,7-dimethyl-8-ribityllumazine synthase (156 aa).

5-amino-6-(D-ribitylamino)uracil contacts are provided by residues F22, 57 to 59 (AVE), and 81 to 83 (CVI). A (2S)-2-hydroxy-3-oxobutyl phosphate-binding site is contributed by 86-87 (GT). H89 (proton donor) is an active-site residue. F114 contributes to the 5-amino-6-(D-ribitylamino)uracil binding site. R128 contributes to the (2S)-2-hydroxy-3-oxobutyl phosphate binding site.

The protein belongs to the DMRL synthase family. In terms of assembly, forms an icosahedral capsid composed of 60 subunits, arranged as a dodecamer of pentamers.

It catalyses the reaction (2S)-2-hydroxy-3-oxobutyl phosphate + 5-amino-6-(D-ribitylamino)uracil = 6,7-dimethyl-8-(1-D-ribityl)lumazine + phosphate + 2 H2O + H(+). It functions in the pathway cofactor biosynthesis; riboflavin biosynthesis; riboflavin from 2-hydroxy-3-oxobutyl phosphate and 5-amino-6-(D-ribitylamino)uracil: step 1/2. Catalyzes the formation of 6,7-dimethyl-8-ribityllumazine by condensation of 5-amino-6-(D-ribitylamino)uracil with 3,4-dihydroxy-2-butanone 4-phosphate. This is the penultimate step in the biosynthesis of riboflavin. The protein is 6,7-dimethyl-8-ribityllumazine synthase of Vibrio cholerae serotype O1 (strain ATCC 39315 / El Tor Inaba N16961).